The primary structure comprises 129 residues: Histone H2A-III (129 aa).

The protein belongs to the histone H2A family. The nucleosome is a histone octamer containing two molecules each of H2A, H2B, H3 and H4 assembled in one H3-H4 heterotetramer and two H2A-H2B heterodimers. The octamer wraps approximately 147 bp of DNA.

Its subcellular location is the nucleus. The protein localises to the chromosome. Its function is as follows. Core component of nucleosome. Nucleosomes wrap and compact DNA into chromatin, limiting DNA accessibility to the cellular machineries which require DNA as a template. Histones thereby play a central role in transcription regulation, DNA repair, DNA replication and chromosomal stability. DNA accessibility is regulated via a complex set of post-translational modifications of histones, also called histone code, and nucleosome remodeling. This Volvox carteri (Green alga) protein is Histone H2A-III.